We begin with the raw amino-acid sequence, 338 residues long: Taste receptor type 2 member 39 (338 aa).

The Extracellular portion of the chain corresponds to 1–30 (MLGRCFPPNTKEKQQLRMIKLCDPAESELS). A helical transmembrane segment spans residues 31–51 (PFLITLTLAVLLAEYLTGIIA). The Cytoplasmic portion of the chain corresponds to 52 to 74 (NGFITAIHAAECVQNKSVSTSGR). Residues 75–95 (ILVFLSVSRIALQSLMMLEIT) form a helical membrane-spanning segment. Topologically, residues 96–116 (ISSTSLSFYSEDTVYYAFKIS) are extracellular. A helical membrane pass occupies residues 117–137 (FIFLNFCSLWFAAWLSFFYFV). Residues 138–156 (KIANFSYPLFLKLRWRISG) are Cytoplasmic-facing. The helical transmembrane segment at 157–177 (LIPWLLWLSVFISFSHSMFCI) threads the bilayer. Residues 178–205 (NICTGYCDNSFPIHSSNSTEKTYFSEIS) are Extracellular-facing. Residue Asn194 is glycosylated (N-linked (GlcNAc...) asparagine). Residues 206 to 226 (VVSLAFFFNLGIVIPLIMFIL) traverse the membrane as a helical segment. The Cytoplasmic portion of the chain corresponds to 227–262 (AAILLILSLKRHTLYMXSNATGSKDPSMEAHIGAIK). Residues 263 to 283 (ATSYFLILYIFNAVALFIYLS) traverse the membrane as a helical segment. Residues 284–291 (NMFDINSL) are Extracellular-facing. A helical membrane pass occupies residues 292–312 (WNTLCQIIMAAYPASHSILLI). Residues 313-338 (KDNPGLRRAWKQLQHRLHLYPKEWTL) are Cytoplasmic-facing.

Belongs to the G-protein coupled receptor T2R family.

The protein localises to the membrane. In terms of biological role, receptor that may play a role in the perception of bitterness and is gustducin-linked. May play a role in sensing the chemical composition of the gastrointestinal content. The activity of this receptor may stimulate alpha gustducin, mediate PLC-beta-2 activation and lead to the gating of TRPM5. This Papio hamadryas (Hamadryas baboon) protein is Taste receptor type 2 member 39 (TAS2R39).